The chain runs to 579 residues: Protein inscuteable homolog (579 aa).

The segment at 74 to 89 (SVQRWMEDLKLMTECE) is important for interaction with GPSM2. Positions 576-579 (ESFV) match the PDZ-binding motif.

As to quaternary structure, interacts with ALS2CR19/PAR3B and GPSM1/AGS3. Interacts with F2RL2/PAR3. Interacts with GPSM2/LGN (via TPR repeat region). In terms of tissue distribution, expressed in brain, kidney, liver, testis and skin.

It localises to the cytoplasm. It is found in the cell cortex. Its function is as follows. May function as an adapter linking the Par3 complex to the GPSM1/GPSM2 complex. Involved in spindle orientation during mitosis. May regulate cell proliferation and differentiation in the developing nervous system. May play a role in the asymmetric division of fibroblasts and participate in the process of stratification of the squamous epithelium. This is Protein inscuteable homolog (Insc) from Mus musculus (Mouse).